The primary structure comprises 67 residues: Large ribosomal subunit protein eL24 (67 aa).

Positions 7, 10, 33, and 37 each coordinate Zn(2+). The C4-type zinc finger occupies 7–37; sequence CDYCGTDIEPGTGTMFVHKDGATTHFCSSKC. Residues 48–60 show a composition bias toward basic and acidic residues; sequence RNLEWTDTARGEA. Residues 48–67 are disordered; the sequence is RNLEWTDTARGEAGEAEDEA.

The protein belongs to the eukaryotic ribosomal protein eL24 family. As to quaternary structure, part of the 50S ribosomal subunit. Forms a cluster with proteins L3 and L14. The cofactor is Zn(2+).

Its function is as follows. Binds to the 23S rRNA. The protein is Large ribosomal subunit protein eL24 (rpl24e) of Haloarcula marismortui (strain ATCC 43049 / DSM 3752 / JCM 8966 / VKM B-1809) (Halobacterium marismortui).